We begin with the raw amino-acid sequence, 104 residues long: N(4)-acetylcytidine amidohydrolase (104 aa).

One can recognise an ASCH domain in the interval 6 to 101; sequence TFFERFEHDI…EQLYMIRFKV (96 aa). The active-site Proton acceptor is the K20. The Nucleophile role is filled by T23. The Proton donor role is filled by E73.

The protein belongs to the N(4)-acetylcytidine amidohydrolase family.

The catalysed reaction is N(4)-acetylcytidine + H2O = cytidine + acetate + H(+). It carries out the reaction N(4)-acetyl-2'-deoxycytidine + H2O = 2'-deoxycytidine + acetate + H(+). The enzyme catalyses N(4)-acetylcytosine + H2O = cytosine + acetate + H(+). Functionally, catalyzes the hydrolysis of N(4)-acetylcytidine (ac4C). In Shewanella oneidensis (strain ATCC 700550 / JCM 31522 / CIP 106686 / LMG 19005 / NCIMB 14063 / MR-1), this protein is N(4)-acetylcytidine amidohydrolase.